Consider the following 444-residue polypeptide: Proline--tRNA ligase (444 aa).

The protein belongs to the class-II aminoacyl-tRNA synthetase family. ProS type 2 subfamily. Homodimer.

The protein localises to the cytoplasm. It catalyses the reaction tRNA(Pro) + L-proline + ATP = L-prolyl-tRNA(Pro) + AMP + diphosphate. In terms of biological role, catalyzes the attachment of proline to tRNA(Pro) in a two-step reaction: proline is first activated by ATP to form Pro-AMP and then transferred to the acceptor end of tRNA(Pro). The sequence is that of Proline--tRNA ligase from Bradyrhizobium sp. (strain BTAi1 / ATCC BAA-1182).